A 207-amino-acid polypeptide reads, in one-letter code: Ribosomal RNA small subunit methyltransferase G (207 aa).

S-adenosyl-L-methionine-binding positions include glycine 71, phenylalanine 76, 122–123 (AE), and arginine 135.

This sequence belongs to the methyltransferase superfamily. RNA methyltransferase RsmG family.

It localises to the cytoplasm. In terms of biological role, specifically methylates the N7 position of a guanine in 16S rRNA. The sequence is that of Ribosomal RNA small subunit methyltransferase G from Cytophaga hutchinsonii (strain ATCC 33406 / DSM 1761 / CIP 103989 / NBRC 15051 / NCIMB 9469 / D465).